The chain runs to 442 residues: Putative arsenical pump membrane protein (442 aa).

The next 11 membrane-spanning stretches (helical) occupy residues I22 to L42, I56 to A76, G85 to L105, N107 to L127, L136 to V156, M174 to F194, L250 to I270, I294 to T314, S328 to F347, I378 to W398, and I419 to W439.

This sequence belongs to the ArsB family.

The protein localises to the cell membrane. In Bacillus subtilis (strain 168), this protein is Putative arsenical pump membrane protein (ywrK).